We begin with the raw amino-acid sequence, 257 residues long: MPLAKRIIPCLDVDKGRVVKGVQFVDIRDAGDPVEVAKKYNEQGADEITFLDITASHEARETTINTVEKIAAEVFIPLTVGGGIRTLDDIRNMLNAGADKVSINSAAVKDPDFVRIAAEKFGSQCIVVAIDAKRVSADGEPGRWEIFTHGGRNPTGIDAVEWAVRMTEYGAGEILLTSMDRDGTKDGFDLGVTRAISEAVRVPVIASGGVGNLQHLVDGVIKGGADAVLAASIFHFGEYTVPEAKAYMEQHGIEVRL.

Active-site residues include Asp12 and Asp131.

This sequence belongs to the HisA/HisF family. Heterodimer of HisH and HisF.

The protein localises to the cytoplasm. The catalysed reaction is 5-[(5-phospho-1-deoxy-D-ribulos-1-ylimino)methylamino]-1-(5-phospho-beta-D-ribosyl)imidazole-4-carboxamide + L-glutamine = D-erythro-1-(imidazol-4-yl)glycerol 3-phosphate + 5-amino-1-(5-phospho-beta-D-ribosyl)imidazole-4-carboxamide + L-glutamate + H(+). It functions in the pathway amino-acid biosynthesis; L-histidine biosynthesis; L-histidine from 5-phospho-alpha-D-ribose 1-diphosphate: step 5/9. Functionally, IGPS catalyzes the conversion of PRFAR and glutamine to IGP, AICAR and glutamate. The HisF subunit catalyzes the cyclization activity that produces IGP and AICAR from PRFAR using the ammonia provided by the HisH subunit. This Teredinibacter turnerae (strain ATCC 39867 / T7901) protein is Imidazole glycerol phosphate synthase subunit HisF.